A 985-amino-acid chain; its full sequence is Protein psiQ (985 aa).

Residues Met-1–Ser-20 form the signal peptide. Positions Gln-102–Asp-247 constitute a PA14 domain. N-linked (GlcNAc...) asparagine glycosylation is found at Asn-127, Asn-309, Asn-424, Asn-491, Asn-517, Asn-527, Asn-592, Asn-620, Asn-649, Asn-696, Asn-735, Asn-767, Asn-786, Asn-824, and Asn-842.

The protein belongs to the prespore-cell-inducing factor family.

The protein localises to the secreted. In Dictyostelium discoideum (Social amoeba), this protein is Protein psiQ (psiQ).